The chain runs to 499 residues: uncharacterized protein (499 aa).

Residues 6–35 and 272–282 each bind FAD; these read EAVI…VIER and YRDGRIFLAGD.

Belongs to the PheA/TfdB FAD monooxygenase family. FAD is required as a cofactor.

This is an uncharacterized protein from Bacillus subtilis (strain 168).